The chain runs to 439 residues: Glutamate-1-semialdehyde 2,1-aminomutase (439 aa).

Lys279 carries the N6-(pyridoxal phosphate)lysine modification.

This sequence belongs to the class-III pyridoxal-phosphate-dependent aminotransferase family. HemL subfamily. Homodimer. Pyridoxal 5'-phosphate is required as a cofactor.

It localises to the cytoplasm. It catalyses the reaction (S)-4-amino-5-oxopentanoate = 5-aminolevulinate. It functions in the pathway porphyrin-containing compound metabolism; protoporphyrin-IX biosynthesis; 5-aminolevulinate from L-glutamyl-tRNA(Glu): step 2/2. The polypeptide is Glutamate-1-semialdehyde 2,1-aminomutase (Rhodopirellula baltica (strain DSM 10527 / NCIMB 13988 / SH1)).